A 905-amino-acid polypeptide reads, in one-letter code: DNA gyrase subunit A (905 aa).

Positions 35-524 (IPDVRDGLKP…GEFDQDIEDL (490 aa)) constitute a Topo IIA-type catalytic domain. The active-site O-(5'-phospho-DNA)-tyrosine intermediate is the tyrosine 123. Positions 551-557 (QKRGGKG) match the GyrA-box motif. A disordered region spans residues 885-905 (TAESEEDSELEEEGLEQSEEV). A compositionally biased stretch (acidic residues) spans 886-905 (AESEEDSELEEEGLEQSEEV).

Belongs to the type II topoisomerase GyrA/ParC subunit family. As to quaternary structure, heterotetramer, composed of two GyrA and two GyrB chains. In the heterotetramer, GyrA contains the active site tyrosine that forms a transient covalent intermediate with DNA, while GyrB binds cofactors and catalyzes ATP hydrolysis.

Its subcellular location is the cytoplasm. The enzyme catalyses ATP-dependent breakage, passage and rejoining of double-stranded DNA.. In terms of biological role, a type II topoisomerase that negatively supercoils closed circular double-stranded (ds) DNA in an ATP-dependent manner to modulate DNA topology and maintain chromosomes in an underwound state. Negative supercoiling favors strand separation, and DNA replication, transcription, recombination and repair, all of which involve strand separation. Also able to catalyze the interconversion of other topological isomers of dsDNA rings, including catenanes and knotted rings. Type II topoisomerases break and join 2 DNA strands simultaneously in an ATP-dependent manner. The polypeptide is DNA gyrase subunit A (Rickettsia conorii (strain ATCC VR-613 / Malish 7)).